Consider the following 500-residue polypeptide: Maturase K (500 aa).

The protein belongs to the intron maturase 2 family. MatK subfamily.

It is found in the plastid. It localises to the chloroplast. In terms of biological role, usually encoded in the trnK tRNA gene intron. Probably assists in splicing its own and other chloroplast group II introns. The polypeptide is Maturase K (Brasenia schreberi (Water shield)).